The chain runs to 350 residues: UPF0284 protein MJ1598 (350 aa).

It belongs to the UPF0284 family.

This is UPF0284 protein MJ1598 from Methanocaldococcus jannaschii (strain ATCC 43067 / DSM 2661 / JAL-1 / JCM 10045 / NBRC 100440) (Methanococcus jannaschii).